The following is a 382-amino-acid chain: UDP-4-amino-4-deoxy-L-arabinose--oxoglutarate aminotransferase (382 aa).

Lys-183 is modified (N6-(pyridoxal phosphate)lysine).

This sequence belongs to the DegT/DnrJ/EryC1 family. ArnB subfamily. In terms of assembly, homodimer. Pyridoxal 5'-phosphate serves as cofactor.

The enzyme catalyses UDP-4-amino-4-deoxy-beta-L-arabinose + 2-oxoglutarate = UDP-beta-L-threo-pentopyranos-4-ulose + L-glutamate. It participates in nucleotide-sugar biosynthesis; UDP-4-deoxy-4-formamido-beta-L-arabinose biosynthesis; UDP-4-deoxy-4-formamido-beta-L-arabinose from UDP-alpha-D-glucuronate: step 2/3. It functions in the pathway bacterial outer membrane biogenesis; lipopolysaccharide biosynthesis. Functionally, catalyzes the conversion of UDP-4-keto-arabinose (UDP-Ara4O) to UDP-4-amino-4-deoxy-L-arabinose (UDP-L-Ara4N). The modified arabinose is attached to lipid A and is required for resistance to polymyxin and cationic antimicrobial peptides. In Pseudomonas fluorescens (strain Pf0-1), this protein is UDP-4-amino-4-deoxy-L-arabinose--oxoglutarate aminotransferase.